The primary structure comprises 103 residues: uncharacterized protein (103 aa).

This is an uncharacterized protein from Acanthamoeba polyphaga mimivirus (APMV).